We begin with the raw amino-acid sequence, 338 residues long: Uroporphyrinogen decarboxylase (338 aa).

Substrate is bound by residues 27–31, D77, Y151, S203, and H317; that span reads RQAGR.

This sequence belongs to the uroporphyrinogen decarboxylase family. As to quaternary structure, homodimer.

It localises to the cytoplasm. It catalyses the reaction uroporphyrinogen III + 4 H(+) = coproporphyrinogen III + 4 CO2. It participates in porphyrin-containing compound metabolism; protoporphyrin-IX biosynthesis; coproporphyrinogen-III from 5-aminolevulinate: step 4/4. Catalyzes the decarboxylation of four acetate groups of uroporphyrinogen-III to yield coproporphyrinogen-III. In Wolbachia pipientis wMel, this protein is Uroporphyrinogen decarboxylase.